The sequence spans 504 residues: Aspartyl/glutamyl-tRNA(Asn/Gln) amidotransferase subunit B (504 aa).

This sequence belongs to the GatB/GatE family. GatB subfamily. In terms of assembly, heterotrimer of A, B and C subunits.

The catalysed reaction is L-glutamyl-tRNA(Gln) + L-glutamine + ATP + H2O = L-glutaminyl-tRNA(Gln) + L-glutamate + ADP + phosphate + H(+). It carries out the reaction L-aspartyl-tRNA(Asn) + L-glutamine + ATP + H2O = L-asparaginyl-tRNA(Asn) + L-glutamate + ADP + phosphate + 2 H(+). Functionally, allows the formation of correctly charged Asn-tRNA(Asn) or Gln-tRNA(Gln) through the transamidation of misacylated Asp-tRNA(Asn) or Glu-tRNA(Gln) in organisms which lack either or both of asparaginyl-tRNA or glutaminyl-tRNA synthetases. The reaction takes place in the presence of glutamine and ATP through an activated phospho-Asp-tRNA(Asn) or phospho-Glu-tRNA(Gln). This Tropheryma whipplei (strain Twist) (Whipple's bacillus) protein is Aspartyl/glutamyl-tRNA(Asn/Gln) amidotransferase subunit B.